A 181-amino-acid polypeptide reads, in one-letter code: Probable pyruvoyl-dependent arginine decarboxylase (181 aa).

Ser43 carries the post-translational modification Pyruvic acid (Ser).

The protein belongs to the PdaD family. Pyruvate is required as a cofactor.

The enzyme catalyses L-arginine + H(+) = agmatine + CO2. The chain is Probable pyruvoyl-dependent arginine decarboxylase from Chlorobium phaeobacteroides (strain BS1).